Consider the following 223-residue polypeptide: DNA mismatch repair protein MutH (223 aa).

It belongs to the MutH family.

The protein resides in the cytoplasm. Functionally, sequence-specific endonuclease that cleaves unmethylated GATC sequences. It is involved in DNA mismatch repair. The chain is DNA mismatch repair protein MutH from Shewanella sp. (strain MR-4).